The following is a 136-amino-acid chain: NADPH-dependent 7-cyano-7-deazaguanine reductase (136 aa).

Cysteine 50 acts as the Thioimide intermediate in catalysis. The active-site Proton donor is the aspartate 57. Residues 72–74 and 91–92 contribute to the substrate site; these read YEL and HE.

It belongs to the GTP cyclohydrolase I family. QueF type 1 subfamily.

Its subcellular location is the cytoplasm. It carries out the reaction 7-aminomethyl-7-carbaguanine + 2 NADP(+) = 7-cyano-7-deazaguanine + 2 NADPH + 3 H(+). The protein operates within tRNA modification; tRNA-queuosine biosynthesis. Catalyzes the NADPH-dependent reduction of 7-cyano-7-deazaguanine (preQ0) to 7-aminomethyl-7-deazaguanine (preQ1). This is NADPH-dependent 7-cyano-7-deazaguanine reductase from Prochlorococcus marinus (strain MIT 9215).